The sequence spans 356 residues: Histidinol-phosphate aminotransferase (356 aa).

Lys-214 carries the N6-(pyridoxal phosphate)lysine modification.

This sequence belongs to the class-II pyridoxal-phosphate-dependent aminotransferase family. Histidinol-phosphate aminotransferase subfamily. In terms of assembly, homodimer. It depends on pyridoxal 5'-phosphate as a cofactor.

It catalyses the reaction L-histidinol phosphate + 2-oxoglutarate = 3-(imidazol-4-yl)-2-oxopropyl phosphate + L-glutamate. Its pathway is amino-acid biosynthesis; L-histidine biosynthesis; L-histidine from 5-phospho-alpha-D-ribose 1-diphosphate: step 7/9. The polypeptide is Histidinol-phosphate aminotransferase (Escherichia coli O127:H6 (strain E2348/69 / EPEC)).